We begin with the raw amino-acid sequence, 252 residues long: 3-dehydroquinate dehydratase (252 aa).

3-dehydroquinate-binding positions include Ser21, 46–48 (EWR), and Arg82. His143 functions as the Proton donor/acceptor in the catalytic mechanism. Catalysis depends on Lys170, which acts as the Schiff-base intermediate with substrate. Residues Arg213, Ser232, and Gln236 each contribute to the 3-dehydroquinate site.

It belongs to the type-I 3-dehydroquinase family. As to quaternary structure, dimer of dimers.

It carries out the reaction 3-dehydroquinate = 3-dehydroshikimate + H2O. Its pathway is metabolic intermediate biosynthesis; chorismate biosynthesis; chorismate from D-erythrose 4-phosphate and phosphoenolpyruvate: step 3/7. With respect to regulation, inhibited by (2R)-2-methyl-3-dehydroquinic acid. Functionally, involved in the third step of the chorismate pathway, which leads to the biosynthesis of aromatic amino acids. Catalyzes the cis-dehydration of 3-dehydroquinate (DHQ) and introduces the first double bond of the aromatic ring to yield 3-dehydroshikimate. The reaction involves the formation of an imine intermediate between the keto group of 3-dehydroquinate and the epsilon-amino group of Lys-170 at the active site. The chain is 3-dehydroquinate dehydratase from Salmonella typhi.